A 240-amino-acid polypeptide reads, in one-letter code: Ribose-5-phosphate isomerase (240 aa).

Residues 34-37 (SGST), 88-91 (DGAD), and 101-104 (KGGG) each bind substrate. Glutamate 110 functions as the Proton acceptor in the catalytic mechanism. A substrate-binding site is contributed by lysine 128.

It belongs to the ribose 5-phosphate isomerase family.

The protein resides in the cytoplasm. It carries out the reaction aldehydo-D-ribose 5-phosphate = D-ribulose 5-phosphate. It functions in the pathway carbohydrate degradation; pentose phosphate pathway; D-ribose 5-phosphate from D-ribulose 5-phosphate (non-oxidative stage): step 1/1. In terms of biological role, involved in the first step of the non-oxidative branch of the pentose phosphate pathway. It catalyzes the reversible conversion of ribose-5-phosphate to ribulose 5-phosphate. The protein is Ribose-5-phosphate isomerase (RKI1) of Candida albicans (strain SC5314 / ATCC MYA-2876) (Yeast).